The primary structure comprises 190 residues: U1 small nuclear ribonucleoprotein C-1 (190 aa).

The Matrin-type zinc-finger motif lies at 4–36; sequence YYCDYCDVFLVSESPSVRKAHNSGRNHLTNVRD. Positions 57-190 are disordered; it reads FETGGGNSTS…PDRARQLGLI (134 aa). Residues 72–82 are compositionally biased toward pro residues; that stretch reads GNPPGSQPGPP. The segment covering 109–124 has biased composition (low complexity); the sequence is AMLALMNGQNGMSSPG. The span at 125-141 shows a compositional bias: pro residues; the sequence is SGPPPMRFAGPPIPNNM. Basic and acidic residues predominate over residues 180 to 190; it reads NPDRARQLGLI.

Belongs to the U1 small nuclear ribonucleoprotein C family. U1 snRNP is composed of the 7 core Sm proteins B/B', D1, D2, D3, E, F and G that assemble in a heptameric protein ring on the Sm site of the small nuclear RNA to form the core snRNP, and at least 3 U1 snRNP-specific proteins U1-70K, U1-A and U1-C. U1-C interacts with U1 snRNA and the 5' splice-site region of the pre-mRNA.

It is found in the nucleus. Functionally, component of the spliceosomal U1 snRNP, which is essential for recognition of the pre-mRNA 5' splice-site and the subsequent assembly of the spliceosome. U1-C is directly involved in initial 5' splice-site recognition for both constitutive and regulated alternative splicing. The interaction with the 5' splice-site seems to precede base-pairing between the pre-mRNA and the U1 snRNA. Stimulates commitment or early (E) complex formation by stabilizing the base pairing of the 5' end of the U1 snRNA and the 5' splice-site region. This is U1 small nuclear ribonucleoprotein C-1 from Puccinia graminis f. sp. tritici (strain CRL 75-36-700-3 / race SCCL) (Black stem rust fungus).